Here is a 764-residue protein sequence, read N- to C-terminus: Putative wall-associated receptor kinase-like 13 (764 aa).

An N-terminal signal peptide occupies residues 1-26; the sequence is MRGNKNYYFLSLLYFLSLPILHFSSC. Topologically, residues 27–379 are extracellular; that stretch reads THKCGDIQIP…HRCIDYHIPE (353 aa). Residues asparagine 78, asparagine 114, asparagine 121, asparagine 164, asparagine 233, asparagine 238, asparagine 259, and asparagine 283 are each glycosylated (N-linked (GlcNAc...) asparagine). Positions 308 to 372 are atypical EGF-like; the sequence is CTCDNHIASG…CINTSGGHRC (65 aa). Cystine bridges form between cysteine 310-cysteine 323, cysteine 345-cysteine 363, and cysteine 352-cysteine 372. Asparagine 365 carries N-linked (GlcNAc...) asparagine glycosylation. A helical membrane pass occupies residues 380–400; the sequence is VMLGLGAGFFVLIVGGGIWWW. The Cytoplasmic segment spans residues 401–764; the sequence is RKLLRKRRMT…SGSTEIARSM (364 aa). A Protein kinase domain is found at 454 to 728; that stretch reads FNDNRVIGQG…REVSTALERI (275 aa). ATP-binding positions include 460-468 and lysine 482; that span reads IGQGGQGTV. Tyrosine 527 carries the phosphotyrosine modification. The active-site Proton acceptor is the aspartate 579. Phosphothreonine occurs at positions 613 and 618. Phosphotyrosine is present on tyrosine 626.

The protein belongs to the protein kinase superfamily. Ser/Thr protein kinase family.

Its subcellular location is the membrane. The enzyme catalyses L-seryl-[protein] + ATP = O-phospho-L-seryl-[protein] + ADP + H(+). It carries out the reaction L-threonyl-[protein] + ATP = O-phospho-L-threonyl-[protein] + ADP + H(+). In terms of biological role, putative serine/threonine-protein kinase that may function as a signaling receptor of extracellular matrix component. The chain is Putative wall-associated receptor kinase-like 13 (WAKL13) from Arabidopsis thaliana (Mouse-ear cress).